Reading from the N-terminus, the 261-residue chain is Small ribosomal subunit protein eS1B (261 aa).

The span at 1-18 shows a compositional bias: basic residues; it reads MTLGKNKRISKGGKRGKK. The tract at residues 1–23 is disordered; that stretch reads MTLGKNKRISKGGKRGKKKAQET.

The protein belongs to the eukaryotic ribosomal protein eS1 family. In terms of assembly, component of the small ribosomal subunit. Mature ribosomes consist of a small (40S) and a large (60S) subunit. The 40S subunit contains about 33 different proteins and 1 molecule of RNA (18S). The 60S subunit contains about 49 different proteins and 3 molecules of RNA (25S, 5.8S and 5S).

The protein localises to the cytoplasm. This Trypanosoma cruzi (strain CL Brener) protein is Small ribosomal subunit protein eS1B.